The chain runs to 98 residues: NADH-ubiquinone oxidoreductase chain 4L (98 aa).

A run of 3 helical transmembrane segments spans residues 1-21 (MPVV…GLLI), 29-49 (SLLC…VTVL), and 61-81 (IILL…LVMV).

The protein belongs to the complex I subunit 4L family. As to quaternary structure, core subunit of respiratory chain NADH dehydrogenase (Complex I) which is composed of 45 different subunits.

Its subcellular location is the mitochondrion inner membrane. It carries out the reaction a ubiquinone + NADH + 5 H(+)(in) = a ubiquinol + NAD(+) + 4 H(+)(out). Its function is as follows. Core subunit of the mitochondrial membrane respiratory chain NADH dehydrogenase (Complex I) which catalyzes electron transfer from NADH through the respiratory chain, using ubiquinone as an electron acceptor. Part of the enzyme membrane arm which is embedded in the lipid bilayer and involved in proton translocation. This chain is NADH-ubiquinone oxidoreductase chain 4L (MT-ND4L), found in Ursus maritimus (Polar bear).